A 167-amino-acid polypeptide reads, in one-letter code: NADH-quinone oxidoreductase subunit B (167 aa).

4 residues coordinate [4Fe-4S] cluster: C40, C41, C105, and C134.

The protein belongs to the complex I 20 kDa subunit family. NDH-1 is composed of 14 different subunits. Subunits NuoB, C, D, E, F, and G constitute the peripheral sector of the complex. The cofactor is [4Fe-4S] cluster.

The protein resides in the cell inner membrane. The catalysed reaction is a quinone + NADH + 5 H(+)(in) = a quinol + NAD(+) + 4 H(+)(out). NDH-1 shuttles electrons from NADH, via FMN and iron-sulfur (Fe-S) centers, to quinones in the respiratory chain. The immediate electron acceptor for the enzyme in this species is believed to be ubiquinone. Couples the redox reaction to proton translocation (for every two electrons transferred, four hydrogen ions are translocated across the cytoplasmic membrane), and thus conserves the redox energy in a proton gradient. This chain is NADH-quinone oxidoreductase subunit B, found in Campylobacter jejuni subsp. jejuni serotype O:6 (strain 81116 / NCTC 11828).